Reading from the N-terminus, the 298-residue chain is Sulfate adenylyltransferase subunit 2 (298 aa).

2 stretches are compositionally biased toward basic and acidic residues: residues 272-282 and 289-298; these read RTSERQGRLID and MEKKKQEGYF. The interval 272 to 298 is disordered; the sequence is RTSERQGRLIDSDSAGSMEKKKQEGYF.

Belongs to the PAPS reductase family. CysD subfamily. As to quaternary structure, heterodimer composed of CysD, the smaller subunit, and CysN.

It carries out the reaction sulfate + ATP + H(+) = adenosine 5'-phosphosulfate + diphosphate. It participates in sulfur metabolism; hydrogen sulfide biosynthesis; sulfite from sulfate: step 1/3. Functionally, with CysN forms the ATP sulfurylase (ATPS) that catalyzes the adenylation of sulfate producing adenosine 5'-phosphosulfate (APS) and diphosphate, the first enzymatic step in sulfur assimilation pathway. APS synthesis involves the formation of a high-energy phosphoric-sulfuric acid anhydride bond driven by GTP hydrolysis by CysN coupled to ATP hydrolysis by CysD. This is Sulfate adenylyltransferase subunit 2 from Burkholderia lata (strain ATCC 17760 / DSM 23089 / LMG 22485 / NCIMB 9086 / R18194 / 383).